The chain runs to 60 residues: Short neurotoxin C (60 aa).

4 cysteine pairs are disulfide-bonded: Cys3/Cys22, Cys17/Cys39, Cys41/Cys52, and Cys53/Cys58.

The protein belongs to the three-finger toxin family. Short-chain subfamily. Type I alpha-neurotoxin sub-subfamily. In terms of tissue distribution, expressed by the venom gland.

Its subcellular location is the secreted. Binds to muscle nicotinic acetylcholine receptor (nAChR) and inhibit acetylcholine from binding to the receptor, thereby impairing neuromuscular transmission. In Aipysurus laevis (Olive sea snake), this protein is Short neurotoxin C.